A 513-amino-acid polypeptide reads, in one-letter code: ATP synthase subunit alpha (513 aa).

169-176 (GDRQTGKT) contacts ATP.

It belongs to the ATPase alpha/beta chains family. In terms of assembly, F-type ATPases have 2 components, CF(1) - the catalytic core - and CF(0) - the membrane proton channel. CF(1) has five subunits: alpha(3), beta(3), gamma(1), delta(1), epsilon(1). CF(0) has three main subunits: a(1), b(2) and c(9-12). The alpha and beta chains form an alternating ring which encloses part of the gamma chain. CF(1) is attached to CF(0) by a central stalk formed by the gamma and epsilon chains, while a peripheral stalk is formed by the delta and b chains.

The protein resides in the cell inner membrane. It carries out the reaction ATP + H2O + 4 H(+)(in) = ADP + phosphate + 5 H(+)(out). Produces ATP from ADP in the presence of a proton gradient across the membrane. The alpha chain is a regulatory subunit. This is ATP synthase subunit alpha from Enterobacter sp. (strain 638).